We begin with the raw amino-acid sequence, 966 residues long: Isoleucine--tRNA ligase (966 aa).

Residues 1-16 show a composition bias toward basic and acidic residues; the sequence is MSDDKRAKSDKNEKNK. Residues 1–24 are disordered; sequence MSDDKRAKSDKNEKNKYPVNLLDT. The 'HIGH' region signature appears at 69-79; that stretch reads PYANGDIHIGH. Glu-599 contributes to the L-isoleucyl-5'-AMP binding site. The 'KMSKS' region motif lies at 640–644; it reads KMSKS. Lys-643 lines the ATP pocket. The Zn(2+) site is built by Cys-929, Cys-932, Cys-949, and Cys-952.

This sequence belongs to the class-I aminoacyl-tRNA synthetase family. IleS type 1 subfamily. Monomer. It depends on Zn(2+) as a cofactor.

Its subcellular location is the cytoplasm. It carries out the reaction tRNA(Ile) + L-isoleucine + ATP = L-isoleucyl-tRNA(Ile) + AMP + diphosphate. Catalyzes the attachment of isoleucine to tRNA(Ile). As IleRS can inadvertently accommodate and process structurally similar amino acids such as valine, to avoid such errors it has two additional distinct tRNA(Ile)-dependent editing activities. One activity is designated as 'pretransfer' editing and involves the hydrolysis of activated Val-AMP. The other activity is designated 'posttransfer' editing and involves deacylation of mischarged Val-tRNA(Ile). This Cupriavidus taiwanensis (strain DSM 17343 / BCRC 17206 / CCUG 44338 / CIP 107171 / LMG 19424 / R1) (Ralstonia taiwanensis (strain LMG 19424)) protein is Isoleucine--tRNA ligase.